The following is a 341-amino-acid chain: MPHSQKSRHCELEQGLQAPKEAQGLVGVQVAEAEKVNTTASSSPSTLIQGTLEKVSASGTPGTPQSSQRVCSPCTTIKATPWNQSDESSRSQEKKDPGASQALMLEKKVDELVKFLSVKYTTKQPITEAEMLKGVIKEHKDHFPPIFMQAHECMEIVFGTDMKEVDPISHSCVLLKSLDLTYDRRLSDDQGMPKTGLLILTFGVILMEANCASEEKIWEVLNIIRVYAGWKDFIYGEPRKLITRDLVQEKYLECCQVSNSDPPRYKFPWGPRAHAETTKMKVLEFFSRVSGSDASSFPLLYEEALRDEKEKAQAIIATMGGTTLMASAHSWAKSSSFSCPE.

2 disordered regions span residues 1 to 21 and 78 to 101; these read MPHS…APKE and KATP…GASQ. Residues 87-97 are compositionally biased toward basic and acidic residues; the sequence is ESSRSQEKKDP. In terms of domain architecture, MAGE spans 105–304; the sequence is LEKKVDELVK…SSFPLLYEEA (200 aa).

This Homo sapiens (Human) protein is Putative MAGE domain-containing protein MAGEA13P (MAGEA13P).